The chain runs to 277 residues: Methyltransferase adrK (277 aa).

S-adenosyl-L-methionine contacts are provided by residues 123-124 (DL), 150-151 (DV), and 151-152 (VL).

It belongs to the class I-like SAM-binding methyltransferase superfamily. As to quaternary structure, homodimer.

Its pathway is secondary metabolite biosynthesis; terpenoid biosynthesis. Methyltransferase; part of the gene cluster that mediates the biosynthesis of andrastins, meroterpenoid compounds that exhibit inhibitory activity against ras farnesyltransferase, suggesting that they could be promising leads for antitumor agents. The first step of the pathway is the synthesis of 3,5-dimethylorsellinic acid (DMOA) by the polyketide synthase adrD via condensation of one acetyl-CoA starter unit with 3 malonyl-CoA units and 2 methylations. DMAO is then converted to farnesyl-DMAO by the prenyltransferase adrG. The methyltransferase adrK catalyzes the methylation of the carboxyl group of farnesyl-DMAO to farnesyl-DMAO methyl ester which is further converted to epoxyfarnesyl-DMAO methyl ester by the FAD-dependent monooxygenase adrH. The terpene cyclase adrI then catalyzes the carbon skeletal rearrangement to generate the andrastin E, the first compound in the pathway having the andrastin scaffold, with the tetracyclic ring system. The post-cyclization tailoring enzymes adrF, adrE, adrJ, and adrA, are involved in the conversion of andrastin E into andrastin A. The short chain dehydrogenase adrF is responsible for the oxidation of the C-3 a hydroxyl group of andrastin E to yield the corresponding ketone, andrastin D. The ketoreductase adrE stereoselectively reduces the carbonyl moiety to reverse the stereochemistry of the C-3 position to yield andrastin F. The acetyltransferase adrJ is the acetyltransferase that attaches the acetyl group to the C-3 hydroxyl group of andrastin F to yield andrastin C. Finally, the cytochrome P450 monooxygenase adrA catalyzes two sequential oxidation reactions of the C-23 methyl group, to generate the corresponding alcohol andrastin B, and aldehyde andrastin A. The sequence is that of Methyltransferase adrK from Penicillium rubens (strain ATCC 28089 / DSM 1075 / NRRL 1951 / Wisconsin 54-1255) (Penicillium chrysogenum).